The following is a 277-amino-acid chain: Elongation factor 1-delta (277 aa).

An N-acetylalanine modification is found at Ala2. Residue Lys17 is modified to N6-acetyllysine. Phosphoserine is present on residues Ser37, Ser44, Ser60, Ser86, and Ser106. The residue at position 107 (Lys107) is an N6-acetyllysine. The segment at 113–171 is disordered; that stretch reads SALEKSSPAHRATTPQTQHVSPMRQVEPPSRKAATATEDDEDDDIDLFGSDEEEDKEAA. Lys117 carries the post-translational modification N6-acetyllysine; alternate. Position 117 is an N6-succinyllysine; alternate (Lys117). At Ser119 the chain carries Phosphoserine. Thr129 bears the Phosphothreonine mark. Ser133 bears the Phosphoserine mark. Residue Thr147 is modified to Phosphothreonine. A compositionally biased stretch (acidic residues) spans 149–168; that stretch reads TEDDEDDDIDLFGSDEEEDK. Phosphoserine; by CK2 is present on Ser162.

This sequence belongs to the EF-1-beta/EF-1-delta family. EF-1 is composed of 4 subunits: alpha, beta, delta, and gamma.

Functionally, EF-1-beta and EF-1-delta stimulate the exchange of GDP bound to EF-1-alpha to GTP. The chain is Elongation factor 1-delta (EEF1D) from Ovis aries (Sheep).